A 506-amino-acid chain; its full sequence is Cysteine--tRNA ligase (506 aa).

Cys-34 is a binding site for Zn(2+). Residues 36 to 46 (PTVYDFAHIGN) carry the 'HIGH' region motif. The Zn(2+) site is built by Cys-230, His-269, and Glu-273. The short motif at 302 to 306 (KMSKS) is the 'KMSKS' region element. Residue Lys-305 coordinates ATP.

Belongs to the class-I aminoacyl-tRNA synthetase family. Monomer. Requires Zn(2+) as cofactor.

Its subcellular location is the cytoplasm. The catalysed reaction is tRNA(Cys) + L-cysteine + ATP = L-cysteinyl-tRNA(Cys) + AMP + diphosphate. The chain is Cysteine--tRNA ligase from Brucella suis (strain ATCC 23445 / NCTC 10510).